The sequence spans 290 residues: Succinate dehydrogenase [ubiquinone] iron-sulfur subunit, mitochondrial (290 aa).

Residues 1-38 (MAAAVVGVSLRRGVPARFLRAGLRPVRGLEAVHGICRG) constitute a mitochondrion transit peptide. One can recognise a 2Fe-2S ferredoxin-type domain in the interval 50-143 (KKFSIYRWDP…TTKIYPLPHM (94 aa)). Positions 103, 108, 111, and 123 each coordinate [2Fe-2S] cluster. Positions 186 to 216 (DRQKLDGLYECILCACCSTSCPSYWWNGDKY) constitute a 4Fe-4S ferredoxin-type domain. Residues Cys-196, Cys-199, and Cys-202 each coordinate [4Fe-4S] cluster. Residue Cys-206 participates in [3Fe-4S] cluster binding. Trp-211 provides a ligand contact to a ubiquinone. Residues Cys-253 and Cys-259 each coordinate [3Fe-4S] cluster. A [4Fe-4S] cluster-binding site is contributed by Cys-263.

It belongs to the succinate dehydrogenase/fumarate reductase iron-sulfur protein family. In terms of assembly, component of complex II composed of four subunits: the flavoprotein (FP) SDHA, iron-sulfur protein (IP) SDHB, and a cytochrome b560 composed of SDHC and SDHD. [2Fe-2S] cluster is required as a cofactor. [3Fe-4S] cluster serves as cofactor. The cofactor is [4Fe-4S] cluster.

The protein localises to the mitochondrion inner membrane. The catalysed reaction is a quinone + succinate = fumarate + a quinol. It carries out the reaction (R)-malate + a quinone = enol-oxaloacetate + a quinol. The enzyme catalyses (S)-malate + a quinone = enol-oxaloacetate + a quinol. The protein operates within carbohydrate metabolism; tricarboxylic acid cycle; fumarate from succinate (eukaryal route): step 1/1. Enol-oxaloacetate inhibits the succinate dehydrogenase activity. In terms of biological role, iron-sulfur protein (IP) subunit of the succinate dehydrogenase complex (mitochondrial respiratory chain complex II), responsible for transferring electrons from succinate to ubiquinone (coenzyme Q). SDH also oxidizes malate to the non-canonical enol form of oxaloacetate, enol-oxaloacetate. Enol-oxaloacetate, which is a potent inhibitor of the succinate dehydrogenase activity, is further isomerized into keto-oxaloacetate. The chain is Succinate dehydrogenase [ubiquinone] iron-sulfur subunit, mitochondrial (SDHB) from Gallus gallus (Chicken).